Reading from the N-terminus, the 25-residue chain is Putative cytochrome c4 (25 aa).

The segment at 1–25 (QEDIEAGKQKSATCTACHGQEGNST) is disordered. Heme contacts are provided by cysteine 14 and cysteine 17.

Binds 2 heme groups per subunit.

The protein localises to the periplasm. Diheme, high potential cytochrome c believed to be an intermediate electron donor to terminal oxidation systems. In Aliivibrio fischeri (Vibrio fischeri), this protein is Putative cytochrome c4.